The chain runs to 333 residues: Fructose-1,6-bisphosphatase class 1 (333 aa).

Mg(2+)-binding residues include Glu-90, Asp-112, Leu-114, and Asp-115. Substrate-binding positions include Asp-115–Ser-118, Asn-207, and Lys-273. Glu-279 is a binding site for Mg(2+).

Belongs to the FBPase class 1 family. Homotetramer. Requires Mg(2+) as cofactor.

The protein localises to the cytoplasm. The catalysed reaction is beta-D-fructose 1,6-bisphosphate + H2O = beta-D-fructose 6-phosphate + phosphate. Its pathway is carbohydrate biosynthesis; gluconeogenesis. The polypeptide is Fructose-1,6-bisphosphatase class 1 (Aromatoleum aromaticum (strain DSM 19018 / LMG 30748 / EbN1) (Azoarcus sp. (strain EbN1))).